The primary structure comprises 464 residues: MMARRDPTSWAKRLVRAQTLQKQRRAPVGPRAPPPDEEDPRLKCKNCGAFGHTARSTRCPMKCWKAALVPATLGKKEGKENLKPWKPGVEANPGPLNKDKGEKEERPRQQDPQRKALLHMFSGKPPEKPLPNGKGSTESSDYLRVARGPMPVHTTCKRPRMDPVLSGRSATEMSGRGSVLASLSPLRKASLSSSSSLGPKERQTGAAADIPRPAVRHQVHETLLVVEPTHSSPEGSCREVPQAASKTHGLLQAVRTQAQDKRPAVTSQPCPSAATHSLGLGSNLSFGSGAKRPAQAPIQACLNFPKKPRLGPFQIPESTIQGGELGAPENLQPPPAATELGPSRSPQMGRRTPAQVPSVERQPPHRRPCLPTAQACTMSHHPAASHDGAQPLRVLFRRLENGRWSSSLLAAPSFHSPEKPGAFLAQSPHVSEKSEAPCVRVPPSVLYEDLQVSSSSEDSDSDLE.

Disordered regions lie at residues 16–42, 71–213, 228–247, 254–273, 309–389, and 418–437; these read RAQT…DPRL, ATLG…IPRP, PTHS…ASKT, VRTQ…CPSA, RLGP…HDGA, and EKPG…SEAP. 2 stretches are compositionally biased toward basic and acidic residues: residues 74-83 and 97-114; these read GKKEGKENLK and NKDK…DPQR. Residues 180-197 are compositionally biased toward low complexity; the sequence is LASLSPLRKASLSSSSSL.

This sequence belongs to the FAM90 family.

The protein is Protein FAM90A20 of Homo sapiens (Human).